We begin with the raw amino-acid sequence, 338 residues long: Fructose-bisphosphate aldolase (338 aa).

Positions 50 and 138 each coordinate substrate. Glutamate 179 (proton acceptor) is an active-site residue. Lysine 221 functions as the Schiff-base intermediate with dihydroxyacetone-P in the catalytic mechanism.

Belongs to the class I fructose-bisphosphate aldolase family.

The catalysed reaction is beta-D-fructose 1,6-bisphosphate = D-glyceraldehyde 3-phosphate + dihydroxyacetone phosphate. The protein operates within carbohydrate degradation; glycolysis; D-glyceraldehyde 3-phosphate and glycerone phosphate from D-glucose: step 4/4. The polypeptide is Fructose-bisphosphate aldolase (Encephalitozoon cuniculi (strain GB-M1) (Microsporidian parasite)).